The following is an 827-amino-acid chain: 4-hydroxy-3-methylbut-2-enyl diphosphate reductase (827 aa).

The interval 1–284 (MEIIRAKHMG…MNIEKKVRGI (284 aa)) is 4-hydroxy-3-methylbut-2-enyl diphosphate reductase. C12 is a [4Fe-4S] cluster binding site. Residues H40 and H79 each contribute to the (2E)-4-hydroxy-3-methylbut-2-enyl diphosphate site. Dimethylallyl diphosphate is bound by residues H40 and H79. Isopentenyl diphosphate-binding residues include H40 and H79. A [4Fe-4S] cluster-binding site is contributed by C101. A (2E)-4-hydroxy-3-methylbut-2-enyl diphosphate-binding site is contributed by H129. H129 is a dimethylallyl diphosphate binding site. H129 contributes to the isopentenyl diphosphate binding site. E131 acts as the Proton donor in catalysis. Position 168 (T168) interacts with (2E)-4-hydroxy-3-methylbut-2-enyl diphosphate. Residue C196 coordinates [4Fe-4S] cluster. S224, S225, N226, and S268 together coordinate (2E)-4-hydroxy-3-methylbut-2-enyl diphosphate. Dimethylallyl diphosphate is bound by residues S224, S225, N226, and S268. Residues S224, S225, N226, and S268 each coordinate isopentenyl diphosphate. S1 motif domains follow at residues 477-545 (GQIV…LSIK), 562-632 (DDEI…LGIK), 649-716 (DTVI…GSLK), and 733-802 (GTTV…LSIK).

This sequence in the N-terminal section; belongs to the IspH family. Requires [4Fe-4S] cluster as cofactor.

The catalysed reaction is isopentenyl diphosphate + 2 oxidized [2Fe-2S]-[ferredoxin] + H2O = (2E)-4-hydroxy-3-methylbut-2-enyl diphosphate + 2 reduced [2Fe-2S]-[ferredoxin] + 2 H(+). It catalyses the reaction dimethylallyl diphosphate + 2 oxidized [2Fe-2S]-[ferredoxin] + H2O = (2E)-4-hydroxy-3-methylbut-2-enyl diphosphate + 2 reduced [2Fe-2S]-[ferredoxin] + 2 H(+). It participates in isoprenoid biosynthesis; dimethylallyl diphosphate biosynthesis; dimethylallyl diphosphate from (2E)-4-hydroxy-3-methylbutenyl diphosphate: step 1/1. The protein operates within isoprenoid biosynthesis; isopentenyl diphosphate biosynthesis via DXP pathway; isopentenyl diphosphate from 1-deoxy-D-xylulose 5-phosphate: step 6/6. Functionally, catalyzes the conversion of 1-hydroxy-2-methyl-2-(E)-butenyl 4-diphosphate (HMBPP) into a mixture of isopentenyl diphosphate (IPP) and dimethylallyl diphosphate (DMAPP). Acts in the terminal step of the DOXP/MEP pathway for isoprenoid precursor biosynthesis. This Fusobacterium nucleatum subsp. nucleatum (strain ATCC 25586 / DSM 15643 / BCRC 10681 / CIP 101130 / JCM 8532 / KCTC 2640 / LMG 13131 / VPI 4355) protein is 4-hydroxy-3-methylbut-2-enyl diphosphate reductase.